A 374-amino-acid chain; its full sequence is Cell division protein DivIB (374 aa).

The tract at residues 1-90 (MWKISNENDI…EEEHFADRLP (90 aa)) is disordered. Topologically, residues 1–103 (MWKISNENDI…KTRNKRLYRR (103 aa)) are cytoplasmic. Residues 39–53 (YLKKQAEEAASKGEN) show a composition bias toward basic and acidic residues. Residues 56–75 (AEVTITLQEQSQEEPQQHLP) are compositionally biased toward polar residues. Residues 104–124 (LAFILTCLGTAILVALYFVSP) form a helical membrane-spanning segment. Residues 125–374 (LSRLSEVTVS…GENQEVQQAE (250 aa)) are Extracellular-facing. A POTRA domain is found at 126–197 (SRLSEVTVSG…NSFKIDIQEY (72 aa)). A disordered region spans residues 325–374 (KESEETGSEVSEDSAVENQEVVDPNAGVATDEANNGTPTNGENQEVQQAE). Residues 326-339 (ESEETGSEVSEDSA) are compositionally biased toward acidic residues. Positions 356–374 (EANNGTPTNGENQEVQQAE) are enriched in polar residues.

Belongs to the FtsQ/DivIB family. DivIB subfamily.

Its subcellular location is the cell membrane. In terms of biological role, cell division protein that may be involved in stabilizing or promoting the assembly of the division complex. In Enterococcus faecalis (strain ATCC 700802 / V583), this protein is Cell division protein DivIB.